The chain runs to 433 residues: tRNA (guanine(10)-N(2))-methyltransferase (433 aa).

This sequence belongs to the class I-like SAM-binding methyltransferase superfamily. TRM11 methyltransferase family. Interacts with TRM112.

It localises to the cytoplasm. The catalysed reaction is guanosine(10) in tRNA + S-adenosyl-L-methionine = N(2)-methylguanosine(10) in tRNA + S-adenosyl-L-homocysteine + H(+). Catalytic subunit of an S-adenosyl-L-methionine-dependent tRNA methyltransferase complex that mediates the methylation of the guanosine nucleotide at position 10 (m2G10) in tRNAs. The sequence is that of tRNA (guanine(10)-N(2))-methyltransferase (TRM11) from Saccharomyces cerevisiae (strain ATCC 204508 / S288c) (Baker's yeast).